The following is a 768-amino-acid chain: MTISPPEKEQKKEPVLDKPIETDAIPVDFSKLDKPGFWSKSLAKGPKTTTWIWNLHADAHDFDTHVGDLQETSRKVFSAHFGHLAVIFIWMSAAFFHGARFSNYSGWLSDPTHVKPGAQVVWPIVGQEMLNADLGGNYHGIQITSGIFQMWRGWGITNETELMALAIGALLMAAIMLHGGIYHYHKAAPKLDWFRNLESMLNHHIAGLVGLGSIAWAGHCIHIGAPTAALMDAIDAGKPLIIDGIPIASIADMPLPHELCNPAIASQIFPGLAGRTVENFFTTNWWAFSDFLTFKGGLNPVTGSLWMTDISHHHLAFGVLAVLGGHLYRTMFGIGHSLKEILDNHAGDPILFPAPNGHKGIYEFLANSWHAQLGLNLAMIGSLSIIISHHMYAMPPYPYLSIDYPTVLGLFTHHMWIGGLFIVGAAAHAGIAMIRDYDPAVHIDNVLDRILKARDALISHLNWACMFLGFHSFGLYIHNDVMRALGRPADMFSDTGIQLQPVFAQWIQNIHNSAAGSTTLAGANVSLQPGLVSEVFNGSVSQVGGKIGIAPIPLGTADFMIHHIHAFTIHVTLLILLKGVLFARSSRLIPDKANLGFRFPCDGPGRGGTCQVSSWDHVFLGLFWMYNGLSVVIFHFSWKMQSDVWGLTGGNFAQSSITINGWLRDFLWAQSSQVLTSYGQPISMYGLMFLGAHFVWAFSLMFLFSGRGYWQELFESIIWAHNKLNLAPTIQPRALSITQGRAVGAAHFLLGGIATTWAFFHARLIGLG.

The next 8 membrane-spanning stretches (helical) occupy residues 76 to 99 (VFSA…FHGA), 162 to 185 (LMAL…YHYH), 201 to 225 (LNHH…HIGA), 310 to 328 (ISHH…GHLY), 369 to 392 (WHAQ…HHMY), 408 to 434 (LGLF…IAMI), 456 to 478 (ALIS…LYIH), and 559 to 577 (FMIH…LILL). [4Fe-4S] cluster contacts are provided by Cys-601 and Cys-610. The next 2 membrane-spanning stretches (helical) occupy residues 617-638 (HVFL…HFSW) and 682-704 (ISMY…MFLF). His-693 is a binding site for divinylchlorophyll a'. Positions 701 and 709 each coordinate divinyl chlorophyll a. Residue Trp-710 coordinates phylloquinone. A helical transmembrane segment spans residues 742–762 (AVGAAHFLLGGIATTWAFFHA).

It belongs to the PsaA/PsaB family. In terms of assembly, the PsaA/B heterodimer binds the P700 divinyl chlorophyll special pair and subsequent electron acceptors. PSI consists of a core antenna complex that captures photons, and an electron transfer chain that converts photonic excitation into a charge separation. The cyanobacterial PSI reaction center is composed of one copy each of PsaA,B,C,D,E,F,I,J,K,L,M and X, and forms trimeric complexes. PSI electron transfer chain: 5 divinyl chlorophyll a, 1 divinyl chlorophyll a', 2 phylloquinones and 3 4Fe-4S clusters. PSI core antenna: 90 divinyl chlorophyll a, 22 carotenoids, 3 phospholipids and 1 galactolipid. P700 is a divinyl chlorophyll a/divinyl chlorophyll a' dimer, A0 is one or more divinyl chlorophyll a, A1 is one or both phylloquinones and FX is a shared 4Fe-4S iron-sulfur center. is required as a cofactor.

The protein localises to the cellular thylakoid membrane. It catalyses the reaction reduced [plastocyanin] + hnu + oxidized [2Fe-2S]-[ferredoxin] = oxidized [plastocyanin] + reduced [2Fe-2S]-[ferredoxin]. PsaA and PsaB bind P700, the primary electron donor of photosystem I (PSI), as well as the electron acceptors A0, A1 and FX. PSI is a plastocyanin/cytochrome c6-ferredoxin oxidoreductase, converting photonic excitation into a charge separation, which transfers an electron from the donor P700 chlorophyll pair to the spectroscopically characterized acceptors A0, A1, FX, FA and FB in turn. Oxidized P700 is reduced on the lumenal side of the thylakoid membrane by plastocyanin or cytochrome c6. This Prochlorococcus marinus (strain NATL2A) protein is Photosystem I P700 chlorophyll a apoprotein A1.